An 89-amino-acid polypeptide reads, in one-letter code: Phosphocarrier protein HPr (89 aa).

Residues 1 to 89 (MERTVTVVPE…DILSTPEAKQ (89 aa)) enclose the HPr domain. Catalysis depends on His14, which acts as the Pros-phosphohistidine intermediate. Ser47 is subject to Phosphoserine; by HPrK/P.

Belongs to the HPr family.

It is found in the cytoplasm. Phosphorylation on Ser-47 inhibits the phosphoryl transfer from enzyme I to HPr. Its function is as follows. General (non sugar-specific) component of the phosphoenolpyruvate-dependent sugar phosphotransferase system (sugar PTS). This major carbohydrate active-transport system catalyzes the phosphorylation of incoming sugar substrates concomitantly with their translocation across the cell membrane. The phosphoryl group from phosphoenolpyruvate (PEP) is transferred to the phosphoryl carrier protein HPr by enzyme I. Phospho-HPr then transfers it to the PTS EIIA domain. Is involved in fructose transport. The chain is Phosphocarrier protein HPr (ptsH1) from Haloferax volcanii (strain ATCC 29605 / DSM 3757 / JCM 8879 / NBRC 14742 / NCIMB 2012 / VKM B-1768 / DS2) (Halobacterium volcanii).